We begin with the raw amino-acid sequence, 395 residues long: Argininosuccinate synthase (395 aa).

Residues 10–18 (AYSGGLDTS) and A37 each bind ATP. Positions 88 and 93 each coordinate L-citrulline. Residue G118 coordinates ATP. L-aspartate is bound by residues T120, N124, and D125. N124 serves as a coordination point for L-citrulline. L-citrulline is bound by residues R128, S179, S188, E264, and Y276.

The protein belongs to the argininosuccinate synthase family. Type 1 subfamily. Homotetramer.

The protein resides in the cytoplasm. The catalysed reaction is L-citrulline + L-aspartate + ATP = 2-(N(omega)-L-arginino)succinate + AMP + diphosphate + H(+). Its pathway is amino-acid biosynthesis; L-arginine biosynthesis; L-arginine from L-ornithine and carbamoyl phosphate: step 2/3. The protein is Argininosuccinate synthase of Pelagibacter ubique (strain HTCC1062).